We begin with the raw amino-acid sequence, 479 residues long: Poly(A) polymerase catalytic subunit (479 aa).

Residues Asp202 and Asp204 contribute to the active site. Asp202, Asp204, and Asp253 together coordinate Ca(2+).

The protein belongs to the poxviridae poly(A) polymerase catalytic subunit family. Heterodimer of a large (catalytic) subunit and a small (regulatory) subunit.

The catalysed reaction is RNA(n) + ATP = RNA(n)-3'-adenine ribonucleotide + diphosphate. Its function is as follows. Polymerase that creates the 3'-poly(A) tail of mRNA's. In Bos taurus (Bovine), this protein is Poly(A) polymerase catalytic subunit (OPG063).